The primary structure comprises 135 residues: Large ribosomal subunit protein uL16c (135 aa).

The segment covering 1–17 has biased composition (basic residues); sequence MLSPKRTKFRKQHRNRM. Residues 1-22 form a disordered region; it reads MLSPKRTKFRKQHRNRMNGKAS.

The protein belongs to the universal ribosomal protein uL16 family. Part of the 50S ribosomal subunit.

It localises to the plastid. Its subcellular location is the chloroplast. In Gracilaria tenuistipitata (Red alga), this protein is Large ribosomal subunit protein uL16c.